Here is a 347-residue protein sequence, read N- to C-terminus: NADH-quinone oxidoreductase subunit H (347 aa).

Transmembrane regions (helical) follow at residues leucine 13–leucine 33, proline 50–phenylalanine 70, glycine 82–isoleucine 102, valine 115–glycine 135, isoleucine 161–valine 181, phenylalanine 198–leucine 218, phenylalanine 248–valine 268, valine 286–valine 306, and valine 325–glycine 345.

It belongs to the complex I subunit 1 family. As to quaternary structure, NDH-1 is composed of 14 different subunits. Subunits NuoA, H, J, K, L, M, N constitute the membrane sector of the complex.

Its subcellular location is the cell inner membrane. It carries out the reaction a quinone + NADH + 5 H(+)(in) = a quinol + NAD(+) + 4 H(+)(out). Its function is as follows. NDH-1 shuttles electrons from NADH, via FMN and iron-sulfur (Fe-S) centers, to quinones in the respiratory chain. The immediate electron acceptor for the enzyme in this species is believed to be ubiquinone. Couples the redox reaction to proton translocation (for every two electrons transferred, four hydrogen ions are translocated across the cytoplasmic membrane), and thus conserves the redox energy in a proton gradient. This subunit may bind ubiquinone. The sequence is that of NADH-quinone oxidoreductase subunit H from Brucella abortus (strain 2308).